A 110-amino-acid polypeptide reads, in one-letter code: VEVLTQTPSPVSAAVGGTVTISCQSTKSIYBBBYLAWYQZKPGQPPKALIYTASSLASGVPSRFTGSGSGTZFTLTLSDVZCDDAATYYCGGADYTGYSFGGGTEVVVKG.

The framework-1 stretch occupies residues V1–C23. Residues Q24–A36 form a complementarity-determining-1 region. The interval W37–Y51 is framework-2. Residues T52–S58 form a complementarity-determining-2 region. The tract at residues G59–C90 is framework-3. Residues G91–S99 are complementarity-determining-3. The framework-4 stretch occupies residues F100 to K109.

The sequence is that of Ig kappa chain V region 2717 from Oryctolagus cuniculus (Rabbit).